The following is a 1440-amino-acid chain: Tensin-3 (1440 aa).

The Phosphatase tensin-type domain occupies 1–170; it reads MEDSHELDLT…QFLSGLLSGA (170 aa). The C2 tensin-type domain maps to 175–301; sequence TSPLFLHFVI…GKIELVFSAT (127 aa). A Phosphothreonine modification is found at threonine 323. 3 positions are modified to phosphoserine: serine 332, serine 361, and serine 370. The interval 358–421 is disordered; that stretch reads RKKSASDTGI…GARRGLSPQE (64 aa). Composition is skewed to polar residues over residues 363-380 and 387-400; these read SDTGIPSSPQGMPATSSP and LSVSSDSGHSTASA. Phosphoserine occurs at positions 440, 516, and 571. 3 disordered regions span residues 607–662, 675–694, and 740–762; these read GEAR…LCPG, TNGVHQEPNTGSSPGSPTLD, and SGRLDSVDGPGRSPGRQGDDPIG. Residues 613–622 show a composition bias toward polar residues; that stretch reads SRSTVDNTGL. Threonine 632 bears the Phosphothreonine mark. Composition is skewed to polar residues over residues 646–659 and 677–690; these read GISNGPNPPDTQQL and GVHQEPNTGSSPGS. 3 positions are modified to phosphoserine: serine 648, serine 687, and serine 690. Position 769 is a phosphoserine (serine 769). A Phosphotyrosine modification is found at tyrosine 773. Phosphoserine is present on residues serine 804, serine 860, serine 894, and serine 960. Disordered stretches follow at residues 846 to 881, 887 to 906, 920 to 975, and 1067 to 1123; these read ETPYVKTSPRYPPFSPPEPQLSSPASLHKGREPRGC, HTVGMSESPVGPKPTMLRAD, SCTV…SGKD, and TVSP…HSGS. The segment covering 855 to 864 has biased composition (pro residues); the sequence is RYPPFSPPEP. Polar residues-rich tracts occupy residues 943-960 and 1067-1087; these read VESSPKSTLTLLGNSHPS and TVSPGASSHHSPGLQNQNVSL. The span at 1094-1104 shows a compositional bias: basic and acidic residues; that stretch reads PEKKRASEGDR. Over residues 1105–1123 the composition is skewed to low complexity; that stretch reads SLGSVSPSSSGFSSPHSGS. Serine 1144 and serine 1149 each carry phosphoserine. One can recognise an SH2 domain in the interval 1167–1277; it reads WYKADISREQ…ALPCKLLIPE (111 aa). Phosphoserine occurs at positions 1288 and 1436. In terms of domain architecture, PTB spans 1305-1439; sequence ACNVWYLNSV…SKVMIGSPKK (135 aa).

This sequence belongs to the PTEN phosphatase protein family. As to quaternary structure, interacts with EGFR; EGF promotes the interaction with EGFR. Interacts with PTK2/FAK1 and BCAR1. Tyrosine phosphorylation is critical for these interactions. Interacts with Rho GTPase-activating protein DLC1 and with the regulatory p85 subunit of the PI3K kinase complex; in resting cells, interacts (via C2 tensin-type domain) with DLC1 but, following growth factor stimulation, TNS3 is phosphorylated which leads to weakened interaction with DLC1 and enhanced interaction (via C2 tensin-type domain) with p85 while DLC1 interaction with PTEN increases. Interacts (when phosphorylated on the SH2 domain) with integrins ITGB1, ITGB3 and ITGB5 and with scaffolding protein PEAK1 (phosphorylated on 'Tyr-632'); these interactions mediate the association of PEAK1 with ITGB1, ITGB3 and ITGB5. Interacts (via N-terminus) with DOCK5 (via N-terminus); the interaction increases DOCK5 guanine nucleotide exchange activity towards Rac. Interacts with receptor tyrosine kinase MET. Post-translationally, phosphorylated on Ser/Thr and Tyr residues. Phosphorylated on Thr-323 in the C2-type tensin domain following EGF stimulation which changes its binding preference from DLC1 to the p85 regulatory subunit of the PI3K kinase complex. EGF induces tyrosine phosphorylation in a time- and dose-dependent manner. Phosphorylation of the SH2 domain enhances interaction with PEAK1. Expressed in brain, heart, lung, liver, spleen, kidney, stomach, small intestine, skeletal muscle, skin, thymus, testis, uterus, placenta, aorta and trachea.

Its subcellular location is the cell junction. It localises to the focal adhesion. The protein localises to the cell projection. The protein resides in the podosome. In terms of biological role, may act as a protein phosphatase and/or a lipid phosphatase. Involved in the dissociation of the integrin-tensin-actin complex. EGF activates TNS4 and down-regulates TNS3 which results in capping the tail of ITGB1. Increases DOCK5 guanine nucleotide exchange activity towards Rac and plays a role in osteoclast podosome organization. Enhances RHOA activation in the presence of DLC1. Required for growth factor-induced epithelial cell migration; growth factor stimulation induces TNS3 phosphorylation which changes its binding preference from DLC1 to the p85 regulatory subunit of the PI3K kinase complex, displacing PI3K inhibitor PTEN and resulting in translocation of the TNS3-p85 complex to the leading edge of migrating cells to promote RAC1 activation. Meanwhile, PTEN switches binding preference from p85 to DLC1 and the PTEN-DLC1 complex translocates to the posterior of migrating cells to activate RHOA. Acts as an adapter protein by bridging the association of scaffolding protein PEAK1 with integrins ITGB1, ITGB3 and ITGB5 which contributes to the promotion of cell migration. Controls tonsil-derived mesenchymal stem cell proliferation and differentiation by regulating the activity of integrin ITGB1. The protein is Tensin-3 (Tns3) of Mus musculus (Mouse).